Here is a 558-residue protein sequence, read N- to C-terminus: Membrane protein insertase YidC (558 aa).

The next 6 helical transmembrane spans lie at 5 to 25, 332 to 352, 355 to 375, 429 to 449, 474 to 494, and 520 to 540; these read IINL…WQYF, AIDF…MNFF, YVGN…LLMF, LPIL…YVTI, LFGL…WPIL, and FMPL…LIYW.

The protein belongs to the OXA1/ALB3/YidC family. Type 1 subfamily. As to quaternary structure, interacts with the Sec translocase complex via SecD. Specifically interacts with transmembrane segments of nascent integral membrane proteins during membrane integration.

It is found in the cell inner membrane. In terms of biological role, required for the insertion and/or proper folding and/or complex formation of integral membrane proteins into the membrane. Involved in integration of membrane proteins that insert both dependently and independently of the Sec translocase complex, as well as at least some lipoproteins. Aids folding of multispanning membrane proteins. This is Membrane protein insertase YidC from Rickettsia typhi (strain ATCC VR-144 / Wilmington).